The sequence spans 463 residues: Elongation factor 1-alpha 2 (463 aa).

Glycine 2 is subject to N,N,N-trimethylglycine. The tr-type G domain maps to lysine 5–threonine 242. The tract at residues glycine 14–serine 21 is G1. 6 residues coordinate GTP: aspartate 17, serine 18, glycine 19, lysine 20, serine 21, and threonine 22. Position 17 (aspartate 17) interacts with Mg(2+). The residue at position 36 (lysine 36) is an N6,N6,N6-trimethyllysine; alternate. Position 36 is an N6,N6-dimethyllysine; alternate (lysine 36). Residue lysine 36 is modified to N6-methyllysine; alternate. Lysine 55 carries the post-translational modification N6,N6,N6-trimethyllysine. N6,N6-dimethyllysine is present on lysine 55. The segment at glycine 70–aspartate 74 is G2. At lysine 79 the chain carries N6,N6,N6-trimethyllysine. The G3 stretch occupies residues aspartate 91–glycine 94. Asparagine 153, lysine 154, and aspartate 156 together coordinate GTP. Residues asparagine 153–aspartate 156 are G4. Serine 163 is modified (phosphoserine). Residue lysine 165 is modified to N6,N6-dimethyllysine; alternate. Lysine 165 carries the N6-methyllysine; alternate modification. An N6,N6,N6-trimethyllysine; alternate; by EEF1AKMT3 modification is found at lysine 165. Lysine 179 bears the N6-acetyllysine mark. Positions 194, 195, and 196 each coordinate GTP. The interval serine 194 to tryptophan 196 is G5. Position 224 is a phosphoserine (serine 224). A Phosphothreonine modification is found at threonine 239. Residues glutamate 301 and glutamate 374 each carry the 5-glutamyl glycerylphosphorylethanolamine modification. The residue at position 439 (lysine 439) is an N6-acetyllysine. Residues lysine 444 to lysine 463 are disordered.

This sequence belongs to the TRAFAC class translation factor GTPase superfamily. Classic translation factor GTPase family. EF-Tu/EF-1A subfamily. As to quaternary structure, homodimer; arranged in a 'head to tail' dimer configuration. Post-translationally, trimethylated at Lys-165 by EEF1AKMT3. Mono-, di-, and trimethylated at Lys-36 by EEF1AKMT4; trimethylated form is predominant. Methylation by EEF1AKMT4 contributes to the fine-tuning of translation rates for a subset of tRNAs. Trimethylated at the N-terminus and dimethylated at Lys-55 by METTL13.

It localises to the endoplasmic reticulum membrane. The enzyme catalyses GTP + H2O = GDP + phosphate + H(+). Its function is as follows. Translation elongation factor that catalyzes the GTP-dependent binding of aminoacyl-tRNA (aa-tRNA) to the A-site of ribosomes during the elongation phase of protein synthesis. Base pairing between the mRNA codon and the aa-tRNA anticodon promotes GTP hydrolysis, releasing the aa-tRNA from EEF1A1 and allowing its accommodation into the ribosome. The growing protein chain is subsequently transferred from the P-site peptidyl tRNA to the A-site aa-tRNA, extending it by one amino acid through ribosome-catalyzed peptide bond formation. The protein is Elongation factor 1-alpha 2 (Eef1a2) of Rattus norvegicus (Rat).